The primary structure comprises 314 residues: Deoxymugineic acid synthase 1 (314 aa).

The interval 1-21 is disordered; it reads MGAGDRTVAGMPRIGMGTAVQ. Asp-44 is an NADP(+) binding site. Catalysis depends on Tyr-49, which acts as the Proton donor. His-112 contacts substrate. NADP(+)-binding positions include 158–159, Gln-180, 258–266, and 273–281; these read AN, FDEARMREN, and ELTEEERRR.

The protein belongs to the aldo/keto reductase family.

It catalyses the reaction 2'-deoxymugineate + NAD(+) = 3''-deamino-3''-oxonicotianamine + NADH + H(+). It carries out the reaction 2'-deoxymugineate + NADP(+) = 3''-deamino-3''-oxonicotianamine + NADPH + H(+). It functions in the pathway siderophore biosynthesis. Functionally, catalyzes the reduction of a 3''-keto intermediate during the biosynthesis of 2'-deoxymugineic acid (DMA) from L-Met. Involved in the formation of phytosiderophores (MAs) belonging to the mugineic acid family and required to acquire iron. The polypeptide is Deoxymugineic acid synthase 1 (Hordeum vulgare (Barley)).